The sequence spans 309 residues: Uricase-2 isozyme 2 (309 aa).

Catalysis depends on charge relay system residues lysine 18 and threonine 64. The urate site is built by threonine 64, aspartate 65, phenylalanine 166, arginine 183, valine 238, glutamine 239, and asparagine 265. Catalysis depends on histidine 267, which acts as the Charge relay system.

This sequence belongs to the uricase family. In terms of assembly, homotetramer.

Its subcellular location is the peroxisome. It catalyses the reaction urate + O2 + H2O = 5-hydroxyisourate + H2O2. Its pathway is purine metabolism; urate degradation; (S)-allantoin from urate: step 1/3. Catalyzes the oxidation of uric acid to 5-hydroxyisourate, which is further processed to form (S)-allantoin. The polypeptide is Uricase-2 isozyme 2 (Glycine max (Soybean)).